A 453-amino-acid chain; its full sequence is MSADTMRAPTYNVAHLLSAVQSEMTRGSEKGDPSEKGLKVTLEDRDLWRRFSKLTNEMIVTKTGRRMFPVLSASVTGLNPNAMYSILLDFTPADEHRWKYVNGEWVPGGKPDSPPPSTAYIHPDSPNFGAHWMKQCVSFSKVKLSNKLNGTGQIMLNSLHKYEPRIHVIRVGGPEKQRLIRSFSFPETQFIAVTAYQNEDITQLKIKYNPFAKAFLDIKEKGEHEFEDCHDHQQPRYPQLGSWFLPSAGTLCPPSPHHQFPPSLGMPSPVSHSCAVERYGSLRSHRSTPYPPPPYEQKYSPTSAYATDSTASSLSLLPAHEAWSPLGSSTHHTSNITTSPSHQYGGVWPPVTSSAVQPASSCGVGSPVHTSLLRAAYSNYSQPSTSSITGVPRPPAGSMSSSCAGYQNYNSPSEIHGGLNSTDAIGSYPTVGNQLCPGKVGAWSPLTPPSPGV.

A DNA-binding region (T-box) is located at residues Leu-47–Asp-217. The tract at residues Arg-283–Ala-304 is disordered.

Its subcellular location is the nucleus. May be involved in the transcriptional regulation of genes required for gastrulation. This Patiria pectinifera (Starfish) protein is T-box transcription factor T homolog.